Consider the following 74-residue polypeptide: ATP synthase subunit 9, mitochondrial (74 aa).

A run of 2 helical transmembrane segments spans residues 8 to 28 (IGAGLATIGVSGAGVGIGLIF) and 50 to 70 (ILGFALTEATGLFCLMLAFLI).

The protein belongs to the ATPase C chain family. As to quaternary structure, F-type ATPases have 2 components, CF(1) - the catalytic core - and CF(0) - the membrane proton channel. CF(1) has five subunits: alpha(3), beta(3), gamma(1), delta(1), epsilon(1). CF(0) has three main subunits: a, b and c.

It is found in the mitochondrion membrane. Mitochondrial membrane ATP synthase (F(1)F(0) ATP synthase or Complex V) produces ATP from ADP in the presence of a proton gradient across the membrane which is generated by electron transport complexes of the respiratory chain. F-type ATPases consist of two structural domains, F(1) - containing the extramembraneous catalytic core and F(0) - containing the membrane proton channel, linked together by a central stalk and a peripheral stalk. During catalysis, ATP synthesis in the catalytic domain of F(1) is coupled via a rotary mechanism of the central stalk subunits to proton translocation. Part of the complex F(0) domain. A homomeric c-ring of probably 10 subunits is part of the complex rotary element. This is ATP synthase subunit 9, mitochondrial (atp9) from Schizosaccharomyces pombe (strain 972 / ATCC 24843) (Fission yeast).